The primary structure comprises 260 residues: NAD kinase (260 aa).

Aspartate 54 serves as the catalytic Proton acceptor. NAD(+)-binding positions include 54–55, 123–124, arginine 150, aspartate 152, and 163–168; these read DG, ND, and TAYSLS.

It belongs to the NAD kinase family. A divalent metal cation is required as a cofactor.

The protein resides in the cytoplasm. The enzyme catalyses NAD(+) + ATP = ADP + NADP(+) + H(+). Its function is as follows. Involved in the regulation of the intracellular balance of NAD and NADP, and is a key enzyme in the biosynthesis of NADP. Catalyzes specifically the phosphorylation on 2'-hydroxyl of the adenosine moiety of NAD to yield NADP. The chain is NAD kinase from Caldicellulosiruptor saccharolyticus (strain ATCC 43494 / DSM 8903 / Tp8T 6331).